We begin with the raw amino-acid sequence, 321 residues long: MPVLMPSADVPTIDISPQLFGTDPTPRRTSRGRSTRPARGSGFFYASHHGIDVRRLQTWSNESTTMTDQRSTTWRSTRYNENNSHVRNGYYMARPGRETVESWCYLNPSFGEDHPMMKAGTPMHEVNVWPDEERHPDFGSFGEQYHREVSASRRCCCGASRWRRQAGESSSNEVTEEDTLSAVSMIRYPYLDPYPEAAIKTGPDGTRLSFEDHLDVSMITVLSKTEVQNLQVETVDGWQSLPTSGENFLINCGTYLGYLTNDYFPAPNHRVKYVNAERLSLPFFLHAGQNSVMKPFTRRTGDRKLNPAVTYGEYLQEGFTR.

Residues 1 to 42 (MPVLMPSADVPTIDISPQLFGTDPTPRRTSRGRSTRPARGSG) form a disordered region. The isopenicillin N site is built by R87, Y91, and Y188. The N-[(5S)-5-amino-5-carboxypentanoyl]-L-cysteinyl-D-valine site is built by R87, Y91, Y188, H213, and D215. The Fe2OG dioxygenase domain maps to 179–287 (TLSAVSMIRY…RLSLPFFLHA (109 aa)). Positions 213, 215, and 269 each coordinate Fe(2+). Position 278 (R278) interacts with 2-oxoglutarate. S280 contributes to the isopenicillin N binding site. Residue S280 participates in N-[(5S)-5-amino-5-carboxypentanoyl]-L-cysteinyl-D-valine binding.

This sequence belongs to the iron/ascorbate-dependent oxidoreductase family. The cofactor is Fe cation. L-ascorbate is required as a cofactor.

It catalyses the reaction N-[(5S)-5-amino-5-carboxypentanoyl]-L-cysteinyl-D-valine + O2 = isopenicillin N + 2 H2O. The protein operates within antibiotic biosynthesis; penicillin G biosynthesis; penicillin G from L-alpha-aminoadipate and L-cysteine and L-valine: step 2/3. Removes, in the presence of oxygen, 4 hydrogen atoms from delta-L-(alpha-aminoadipyl)-L-cysteinyl-D-valine (ACV) to form the azetidinone and thiazolidine rings of isopenicillin. The chain is Isopenicillin N synthase (pcbC) from Streptantibioticus cattleyicolor (Streptomyces cattleya).